The chain runs to 220 residues: Large ribosomal subunit protein uL4 (220 aa).

The tract at residues 45-102 is disordered; it reads AARQGTHKTKTRGEVRGGGRKPFRQKGTGRARQGSIRAPHYTGGGTVHGPVPRDYSQR. Residues 62 to 73 are compositionally biased toward basic residues; it reads GGRKPFRQKGTG.

Belongs to the universal ribosomal protein uL4 family. Part of the 50S ribosomal subunit.

In terms of biological role, one of the primary rRNA binding proteins, this protein initially binds near the 5'-end of the 23S rRNA. It is important during the early stages of 50S assembly. It makes multiple contacts with different domains of the 23S rRNA in the assembled 50S subunit and ribosome. Its function is as follows. Forms part of the polypeptide exit tunnel. This Corynebacterium aurimucosum (strain ATCC 700975 / DSM 44827 / CIP 107346 / CN-1) (Corynebacterium nigricans) protein is Large ribosomal subunit protein uL4.